The primary structure comprises 347 residues: Autoinducer 2 import system permease protein LsrC (347 aa).

The next 9 membrane-spanning stretches (helical) occupy residues 14 to 34 (LLAI…YLSV), 39 to 59 (MVFS…MVML), 72 to 92 (GMCA…PVAC), 93 to 113 (LATL…VAWL), 115 to 135 (IPAI…MLLW), 155 to 175 (VFLG…LMAW), 213 to 233 (LNGG…GFIP), 249 to 269 (VLGG…ILGA), and 284 to 304 (IPAW…LVFD).

Belongs to the binding-protein-dependent transport system permease family. AraH/RbsC subfamily. As to quaternary structure, the complex is composed of two ATP-binding proteins (LsrA), two transmembrane proteins (LsrC and LsrD) and a solute-binding protein (LsrB).

It is found in the cell inner membrane. In terms of biological role, part of the ABC transporter complex LsrABCD involved in autoinducer 2 (AI-2) import. Probably responsible for the translocation of the substrate across the membrane. The chain is Autoinducer 2 import system permease protein LsrC (lsrC) from Salmonella typhi.